The primary structure comprises 130 residues: Protein ApaG (130 aa).

The ApaG domain maps to 3–127; that stretch reads RALTRDIEVT…FSLDTPDLRR (125 aa).

The chain is Protein ApaG from Allorhizobium ampelinum (strain ATCC BAA-846 / DSM 112012 / S4) (Agrobacterium vitis (strain S4)).